The primary structure comprises 1165 residues: Symplekin (1165 aa).

HEAT repeat units lie at residues 23–58 (TATA…TVLG), 61–95 (AELA…QVCK), 98–140 (VELL…YLCS), 147–186 (SAEQ…GVVV), and 218–257 (KLQE…IAKM). The interval 365-384 (DQQQREMELDTEELERQKQK) is disordered. The span at 367-384 (QQREMELDTEELERQKQK) shows a compositional bias: basic and acidic residues.

Belongs to the Symplekin family. Interacts with Cpsf73 and Cpsf100 forming a core cleavage factor required for both polyadenylated and histone mRNA processing. Interacts with Slbp and Lsm11.

Its subcellular location is the nucleus. In terms of biological role, component of a protein complex required for cotranscriptional processing of 3'-ends of polyadenylated and histone pre-mRNA. Involved in germline stem cell transit amplification, differentiation and mitosis-to-meiosis transition. The protein is Symplekin of Drosophila melanogaster (Fruit fly).